Reading from the N-terminus, the 239-residue chain is Large ribosomal subunit protein uL2 (239 aa).

Residues 200–239 form a disordered region; the sequence is VNHPHGGKEHHIGRPSTVSRRAPPGRKVGHIAARRTGRRK. The span at 222-239 shows a compositional bias: basic residues; the sequence is PPGRKVGHIAARRTGRRK.

The protein belongs to the universal ribosomal protein uL2 family. As to quaternary structure, part of the 50S ribosomal subunit. Forms a bridge to the 30S subunit in the 70S ribosome.

One of the primary rRNA binding proteins. Required for association of the 30S and 50S subunits to form the 70S ribosome, for tRNA binding and peptide bond formation. It has been suggested to have peptidyltransferase activity; this is somewhat controversial. Makes several contacts with the 16S rRNA in the 70S ribosome. The chain is Large ribosomal subunit protein uL2 from Thermococcus onnurineus (strain NA1).